A 445-amino-acid polypeptide reads, in one-letter code: 3-phosphoshikimate 1-carboxyvinyltransferase (445 aa).

A disordered region spans residues 1–25; the sequence is MSGHGPAQPMTARRSGPLKGRAEIP. 3 residues coordinate 3-phosphoshikimate: Lys-28, Ser-29, and Arg-33. Residue Lys-28 participates in phosphoenolpyruvate binding. 2 residues coordinate phosphoenolpyruvate: Gly-101 and Arg-129. Ser-174, Gln-176, Asp-326, and Lys-353 together coordinate 3-phosphoshikimate. Gln-176 is a binding site for phosphoenolpyruvate. Catalysis depends on Asp-326, which acts as the Proton acceptor. 2 residues coordinate phosphoenolpyruvate: Arg-357 and Arg-400.

This sequence belongs to the EPSP synthase family. Monomer.

Its subcellular location is the cytoplasm. It catalyses the reaction 3-phosphoshikimate + phosphoenolpyruvate = 5-O-(1-carboxyvinyl)-3-phosphoshikimate + phosphate. The protein operates within metabolic intermediate biosynthesis; chorismate biosynthesis; chorismate from D-erythrose 4-phosphate and phosphoenolpyruvate: step 6/7. Functionally, catalyzes the transfer of the enolpyruvyl moiety of phosphoenolpyruvate (PEP) to the 5-hydroxyl of shikimate-3-phosphate (S3P) to produce enolpyruvyl shikimate-3-phosphate and inorganic phosphate. In Cereibacter sphaeroides (strain ATCC 17029 / ATH 2.4.9) (Rhodobacter sphaeroides), this protein is 3-phosphoshikimate 1-carboxyvinyltransferase.